Here is a 232-residue protein sequence, read N- to C-terminus: Venom allergen 5 (232 aa).

The N-terminal stretch at 1–23 is a signal peptide; that stretch reads MEQIKYLLIGIIFSSAISSSLQC. 3 disulfide bridges follow: C28–C43, C54–C119, and C198–C215. Positions 71-217 constitute an SCP domain; it reads LQLHNELRAK…FYTTMVACNY (147 aa).

This sequence belongs to the CRISP family. Venom allergen 5-like subfamily. As to expression, expressed by the venom gland.

It is found in the secreted. In Microctonus hyperodae (Parasitoid wasp), this protein is Venom allergen 5.